The chain runs to 499 residues: Cobyric acid synthase (499 aa).

The GATase cobBQ-type domain occupies 251 to 442; that stretch reads SLDIAVVSLK…LHGVFDNLEW (192 aa). The active-site Nucleophile is the Cys332. His434 is a catalytic residue.

The protein belongs to the CobB/CobQ family. CobQ subfamily.

It functions in the pathway cofactor biosynthesis; adenosylcobalamin biosynthesis. Functionally, catalyzes amidations at positions B, D, E, and G on adenosylcobyrinic A,C-diamide. NH(2) groups are provided by glutamine, and one molecule of ATP is hydrogenolyzed for each amidation. The protein is Cobyric acid synthase of Streptococcus sanguinis (strain SK36).